Here is a 746-residue protein sequence, read N- to C-terminus: Bud site selection protein 7 (746 aa).

The tract at residues 733 to 746 is CHS5-binding; sequence LNFFTTCTIGCYDA.

This sequence belongs to the CHAPS family. As to quaternary structure, component of the CHS5/6 complex composed of the 4 CHAPS proteins BCH1, BCH2v, BUD7, and CHS6 as well as at least CHS5 and GTP-bound ARF1. The complex interacts with the cargo protein CHS3.

The protein resides in the golgi apparatus. It is found in the trans-Golgi network membrane. Functionally, member of the CHS5-ARF1P-binding proteins (CHAPS) which mediates export of specific cargo proteins, including chitin synthase CHS3. May be involved in positioning the proximal bud pole signal. The protein is Bud site selection protein 7 (BUD7) of Saccharomyces cerevisiae (strain ATCC 204508 / S288c) (Baker's yeast).